A 511-amino-acid chain; its full sequence is Bifunctional purine biosynthesis protein PurH (511 aa).

Residues methionine 1 to valine 145 enclose the MGS-like domain.

The protein belongs to the PurH family.

The catalysed reaction is (6R)-10-formyltetrahydrofolate + 5-amino-1-(5-phospho-beta-D-ribosyl)imidazole-4-carboxamide = 5-formamido-1-(5-phospho-D-ribosyl)imidazole-4-carboxamide + (6S)-5,6,7,8-tetrahydrofolate. The enzyme catalyses IMP + H2O = 5-formamido-1-(5-phospho-D-ribosyl)imidazole-4-carboxamide. The protein operates within purine metabolism; IMP biosynthesis via de novo pathway; 5-formamido-1-(5-phospho-D-ribosyl)imidazole-4-carboxamide from 5-amino-1-(5-phospho-D-ribosyl)imidazole-4-carboxamide (10-formyl THF route): step 1/1. It functions in the pathway purine metabolism; IMP biosynthesis via de novo pathway; IMP from 5-formamido-1-(5-phospho-D-ribosyl)imidazole-4-carboxamide: step 1/1. The protein is Bifunctional purine biosynthesis protein PurH of Bacillus cytotoxicus (strain DSM 22905 / CIP 110041 / 391-98 / NVH 391-98).